The primary structure comprises 122 residues: uncharacterized protein (122 aa).

The Cytoplasmic segment spans residues 1–24 (MKNRKFSNLLLLRLRILCFNKKPA). The helical transmembrane segment at 25–45 (FAATSYAFFFRNFSVLIFIMV) threads the bilayer. Residues 46-57 (PDEKENGAAADN) lie on the Extracellular side of the membrane. The helical transmembrane segment at 58–78 (SFSLLIGRGVVLFLFYCPTAL) threads the bilayer. At 79–122 (KMHGPVPAHWFCDKNIEAIQSDGQIRLLRSGPFPWSHGTCIRGA) the chain is on the cytoplasmic side.

Its subcellular location is the membrane. This is an uncharacterized protein from Saccharomyces cerevisiae (strain ATCC 204508 / S288c) (Baker's yeast).